The chain runs to 511 residues: GATOR complex protein NPRL3 (511 aa).

The interval 37–58 (KPATKAPSKDPQPSSSNPGQCV) is disordered.

Belongs to the NPR3 family. In terms of assembly, probably part of the GATOR complex.

Its subcellular location is the lysosome membrane. Functionally, as a component of the GATOR complex may function in the amino acid-sensing branch of the TORC1 signaling pathway. The protein is GATOR complex protein NPRL3 (nprl-3) of Caenorhabditis elegans.